A 118-amino-acid chain; its full sequence is Putative pterin-4-alpha-carbinolamine dehydratase (118 aa).

The protein belongs to the pterin-4-alpha-carbinolamine dehydratase family.

The catalysed reaction is (4aS,6R)-4a-hydroxy-L-erythro-5,6,7,8-tetrahydrobiopterin = (6R)-L-erythro-6,7-dihydrobiopterin + H2O. The polypeptide is Putative pterin-4-alpha-carbinolamine dehydratase (Xanthomonas oryzae pv. oryzae (strain MAFF 311018)).